A 300-amino-acid polypeptide reads, in one-letter code: Ribonuclease HIII (300 aa).

In terms of domain architecture, RNase H type-2 spans 83 to 300 (IPIIGSDEVG…THKAQALLTK (218 aa)). Residues aspartate 89, glutamate 90, and aspartate 194 each contribute to the a divalent metal cation site.

It belongs to the RNase HII family. RnhC subfamily. Requires Mn(2+) as cofactor. It depends on Mg(2+) as a cofactor.

The protein resides in the cytoplasm. It catalyses the reaction Endonucleolytic cleavage to 5'-phosphomonoester.. Endonuclease that specifically degrades the RNA of RNA-DNA hybrids. This is Ribonuclease HIII from Streptococcus pyogenes serotype M2 (strain MGAS10270).